The chain runs to 173 residues: Ribosomal RNA large subunit methyltransferase H (173 aa).

Positions 89 and 121 each coordinate S-adenosyl-L-methionine.

This sequence belongs to the RNA methyltransferase RlmH family. Homodimer.

The protein resides in the cytoplasm. It catalyses the reaction pseudouridine(1915) in 23S rRNA + S-adenosyl-L-methionine = N(3)-methylpseudouridine(1915) in 23S rRNA + S-adenosyl-L-homocysteine + H(+). Its function is as follows. Specifically methylates the pseudouridine at position 1915 (m3Psi1915) in 23S rRNA. The protein is Ribosomal RNA large subunit methyltransferase H of Chelativorans sp. (strain BNC1).